The chain runs to 199 residues: GTP-binding protein Di-Ras2 (199 aa).

Residues 14–21 (GAGGVGKS), 33–39 (RESYIPT), 61–65 (DTTGS), and 121–124 (NKCD) each bind GTP. Ser-35 bears the Phosphoserine mark. The Effector region signature appears at 36–44 (YIPTVEDTY). Phosphoserine is present on Ser-126. Residue 152 to 153 (AK) coordinates GTP. Position 196 is a cysteine methyl ester (Cys-196). Residue Cys-196 is the site of S-geranylgeranyl cysteine attachment. Residues 197–199 (VIM) constitute a propeptide, removed in mature form.

This sequence belongs to the small GTPase superfamily. Di-Ras family. Post-translationally, ubiquitinated by the ECS(ASB11) complex via 'Lys-11'-linked ubiquitin chains, leading to its degradation by the proteasome.

It is found in the cell membrane. The enzyme catalyses GTP + H2O = GDP + phosphate + H(+). Its function is as follows. Displays low GTPase activity and exists predominantly in the GTP-bound form. This is GTP-binding protein Di-Ras2 (DIRAS2) from Pongo abelii (Sumatran orangutan).